A 259-amino-acid polypeptide reads, in one-letter code: Phosphatidylglycerol--prolipoprotein diacylglyceryl transferase (259 aa).

The next 4 helical transmembrane spans lie at 10–30, 50–70, 86–106, and 112–132; these read IGLLEIRWYSLAYIIGILFAY, IISWWVTGMILGGRIGYILFY, WKGGMSFHGASLGLFCTMYIF, and IKFLSAIDLCLCAVPVGIFLG. Arg-133 is a binding site for a 1,2-diacyl-sn-glycero-3-phospho-(1'-sn-glycerol). The next 3 helical transmembrane spans lie at 169 to 189, 197 to 217, and 227 to 247; these read LYEAFFEGLLLFVVMNLLFFF, GMLFTIFMIWYGIVRFFIEFV, and ILFNWITMGQLLSFIMVILGI.

Belongs to the Lgt family.

It is found in the cell inner membrane. The enzyme catalyses L-cysteinyl-[prolipoprotein] + a 1,2-diacyl-sn-glycero-3-phospho-(1'-sn-glycerol) = an S-1,2-diacyl-sn-glyceryl-L-cysteinyl-[prolipoprotein] + sn-glycerol 1-phosphate + H(+). It participates in protein modification; lipoprotein biosynthesis (diacylglyceryl transfer). In terms of biological role, catalyzes the transfer of the diacylglyceryl group from phosphatidylglycerol to the sulfhydryl group of the N-terminal cysteine of a prolipoprotein, the first step in the formation of mature lipoproteins. This is Phosphatidylglycerol--prolipoprotein diacylglyceryl transferase from Ehrlichia ruminantium (strain Gardel).